A 359-amino-acid chain; its full sequence is Doublesex- and mab-3-related transcription factor B1 (359 aa).

Positions 7–54 (CSRCRNHGYLVPVKGHTGKCRWKQCICDKCYLITERQKIMAAQKVLRT) form a DNA-binding region, DM. 2 disordered regions span residues 111–149 (PPQA…RDRS) and 262–359 (SGLV…EQSN). Pro residues-rich tracts occupy residues 277–299 (CSPP…PQPQ) and 315–325 (LPPPPPPPSPP). A compositionally biased stretch (polar residues) spans 348–359 (EPSQDSPQEQSN).

It belongs to the DMRT family. In terms of tissue distribution, brain.

It is found in the nucleus. This Mus musculus (Mouse) protein is Doublesex- and mab-3-related transcription factor B1 (Dmrtb1).